The chain runs to 71 residues: Small ribosomal subunit protein bS21 (71 aa).

Basic residues predominate over residues 49–59 (KAAAVKRAAKK). The segment at 49–71 (KAAAVKRAAKKVSRENARRVRMY) is disordered. A compositionally biased stretch (basic and acidic residues) spans 60–71 (VSRENARRVRMY).

The protein belongs to the bacterial ribosomal protein bS21 family.

This is Small ribosomal subunit protein bS21 from Colwellia psychrerythraea (strain 34H / ATCC BAA-681) (Vibrio psychroerythus).